The primary structure comprises 292 residues: Ribosomal protein L11 methyltransferase (292 aa).

S-adenosyl-L-methionine is bound by residues threonine 143, glycine 164, aspartate 186, and asparagine 228.

It belongs to the methyltransferase superfamily. PrmA family.

The protein resides in the cytoplasm. It catalyses the reaction L-lysyl-[protein] + 3 S-adenosyl-L-methionine = N(6),N(6),N(6)-trimethyl-L-lysyl-[protein] + 3 S-adenosyl-L-homocysteine + 3 H(+). Functionally, methylates ribosomal protein L11. The polypeptide is Ribosomal protein L11 methyltransferase (Tolumonas auensis (strain DSM 9187 / NBRC 110442 / TA 4)).